Reading from the N-terminus, the 131-residue chain is Phosphoribosyl-AMP cyclohydrolase (131 aa).

Asp-89 provides a ligand contact to Mg(2+). Cys-90 contributes to the Zn(2+) binding site. Mg(2+)-binding residues include Asp-91 and Asp-93. Residues Cys-106 and Cys-113 each coordinate Zn(2+).

It belongs to the PRA-CH family. Homodimer. Requires Mg(2+) as cofactor. The cofactor is Zn(2+).

The protein localises to the cytoplasm. It catalyses the reaction 1-(5-phospho-beta-D-ribosyl)-5'-AMP + H2O = 1-(5-phospho-beta-D-ribosyl)-5-[(5-phospho-beta-D-ribosylamino)methylideneamino]imidazole-4-carboxamide. Its pathway is amino-acid biosynthesis; L-histidine biosynthesis; L-histidine from 5-phospho-alpha-D-ribose 1-diphosphate: step 3/9. In terms of biological role, catalyzes the hydrolysis of the adenine ring of phosphoribosyl-AMP. This chain is Phosphoribosyl-AMP cyclohydrolase, found in Pyrobaculum aerophilum (strain ATCC 51768 / DSM 7523 / JCM 9630 / CIP 104966 / NBRC 100827 / IM2).